The sequence spans 605 residues: Protein DENND6A (605 aa).

The disordered stretch occupies residues 1–20 (MALPGPAVFGPGSRGSLDEA). The region spanning 60-239 (HCVCVVGFDL…KVRIPTCHDK (180 aa)) is the uDENN domain. Ser-124 is subject to Phosphoserine. The cDENN domain occupies 265–390 (EVDLFRCFCP…VKVKKLKNLK (126 aa)). A dDENN domain is found at 392–525 (LDSKPGVYTS…KTRRKEMTQK (134 aa)). Residue Lys-507 is modified to N6-methyllysine.

This sequence belongs to the DENND6 family.

The protein localises to the recycling endosome. Its subcellular location is the cytoplasm. Its function is as follows. Guanine nucleotide exchange factor (GEF) for RAB14. Component of an endocytic recycling pathway that is required for the control of ADAM10 transport, shedding of N-cadherin/CDH2 by ADAM9 or ADAM10 and regulation of cell-cell junctions. Required for RAB14 recruitment to recycling endosomes. The chain is Protein DENND6A (Dennd6a) from Mus musculus (Mouse).